Here is a 362-residue protein sequence, read N- to C-terminus: MTQCYAEITGWGKCLPPATLSNHDLSTFLDTSDEWIQSRTGIEQRRISHVNTSDLATVAAQHAIACAGVSVEEIDLIIVATCSPDSLIPNIASRVQQNLGIPSAAAFDLNAACTGFLYGLETATRLMQASHYRHALVIGAERLSFYLDWTKRDTAVLFGDGAGAVVLSKTEQKVGLQDAQIGCDAQGRDILAVPKFGTAMDRFDADNGYWAFDFVGKEIFKRAVRGMGAAAQQVLARSGLSTEEIDVVIPHQANIRIIQTLCDLAGIAQDKAFVNIHRYGNTSAATVPIALCEALEQGKIKPHDDLLVAAFGAGLTWGAGHIRWGERITPLGKSDAQLPSCDHTALDLLSKAIEHCKRHQSE.

Residues Cys113 and His251 contribute to the active site. The ACP-binding stretch occupies residues 252-256 (QANIR). The active site involves Asn281.

This sequence belongs to the thiolase-like superfamily. FabH family. In terms of assembly, homodimer.

The protein resides in the cytoplasm. The catalysed reaction is malonyl-[ACP] + acetyl-CoA + H(+) = 3-oxobutanoyl-[ACP] + CO2 + CoA. The protein operates within lipid metabolism; fatty acid biosynthesis. Functionally, catalyzes the condensation reaction of fatty acid synthesis by the addition to an acyl acceptor of two carbons from malonyl-ACP. Catalyzes the first condensation reaction which initiates fatty acid synthesis and may therefore play a role in governing the total rate of fatty acid production. Possesses both acetoacetyl-ACP synthase and acetyl transacylase activities. Its substrate specificity determines the biosynthesis of branched-chain and/or straight-chain of fatty acids. This is Beta-ketoacyl-[acyl-carrier-protein] synthase III 2 from Vibrio cholerae serotype O1 (strain ATCC 39315 / El Tor Inaba N16961).